The sequence spans 275 residues: MTSTPIERAVYIVSDSTGITAETFSHSVLSQFDEVNFKPVRLPFIDTLDKAREVVARINRNALEAGVPPIVFSTLVNPEILALVRQSNGVFLDLFGTFVSHIEQALGLKSSHSIGRSHMAANSEKYRNRIDAINFSLAHDDGQFVNQLDQADVILVGVSRCGKTPTSLYLAMQYAVKAANFPLTPDDFERGALPKTIAPYRGKLFGLSIQPERLAEVRNERRPNSHYARLEQCRYEVAEAERMMRREGISWLSTTTKSIEEIATTVLQEVGLERV.

157 to 164 lines the ADP pocket; it reads GVSRCGKT.

The protein belongs to the pyruvate, phosphate/water dikinase regulatory protein family. PSRP subfamily.

It catalyses the reaction [pyruvate, water dikinase] + ADP = [pyruvate, water dikinase]-phosphate + AMP + H(+). The catalysed reaction is [pyruvate, water dikinase]-phosphate + phosphate + H(+) = [pyruvate, water dikinase] + diphosphate. Functionally, bifunctional serine/threonine kinase and phosphorylase involved in the regulation of the phosphoenolpyruvate synthase (PEPS) by catalyzing its phosphorylation/dephosphorylation. This is Putative phosphoenolpyruvate synthase regulatory protein from Bordetella bronchiseptica (strain ATCC BAA-588 / NCTC 13252 / RB50) (Alcaligenes bronchisepticus).